The sequence spans 136 residues: MARTKQTARKSTGGKAPRKQLATKAWNTLATATGGVKKPHRFRPGTVALREIRKYQKSTELLIRKLPFQRLVREIAQDFKTDLRFQSSAVAALQEASEAYLVGLFEDTNLCAIHAKRVTIMPKDMQLARRIRGERA.

Positions 1-20 (MARTKQTARKSTGGKAPRKQ) are disordered. Lysine 5 is modified (N6-methylated lysine). N6-acetyllysine; alternate is present on lysine 10. The residue at position 10 (lysine 10) is an N6-methylated lysine; alternate. Serine 11 is subject to Phosphoserine. The residue at position 12 (threonine 12) is a Phosphothreonine. Lysine 15 carries the N6-acetyllysine modification. Residues lysine 19 and lysine 24 each carry the N6-acetyllysine; alternate modification. Residues lysine 19 and lysine 24 each carry the N6-methylated lysine; alternate modification. Lysine 37 carries the N6-methylated lysine modification.

Belongs to the histone H3 family. As to quaternary structure, the nucleosome is a histone octamer containing two molecules each of H2A, H2B, H3 and H4 assembled in one H3-H4 heterotetramer and two H2A-H2B heterodimers. The octamer wraps approximately 147 bp of DNA. Post-translationally, acetylation is generally linked to gene activation. Can be acetylated to form H3K9ac, H3K14ac, H3K18ac and H3K23ac. H3K9ac could compete with H3K9me and prevent gene silencing. H3K9ac is restricted to euchromatin. In terms of processing, methylated to form mainly H3K4me, H3K9me, H3K18me, H3K23me and H3K36me. H3K4me1/2/3, H3K9me3 and H3K36me1/2/3 are typical marks for euchromatin, whereas heterochromatic chromocenters are enriched in H3K9me1/2. H2BK143ub1 is probably prerequisite for H3K4me. Can be phosphorylated to form H3S10ph and H3T11ph.

The protein resides in the nucleus. The protein localises to the chromosome. Its function is as follows. Core component of nucleosome. Nucleosomes wrap and compact DNA into chromatin, limiting DNA accessibility to the cellular machineries which require DNA as a template. Histones thereby play a central role in transcription regulation, DNA repair, DNA replication and chromosomal stability. DNA accessibility is regulated via a complex set of post-translational modifications of histones, also called histone code, and nucleosome remodeling. This Cichorium intybus (Chicory) protein is Histone H3.2.